A 334-amino-acid polypeptide reads, in one-letter code: Lipoyl synthase (334 aa).

[4Fe-4S] cluster-binding residues include Cys-71, Cys-76, Cys-82, Cys-97, Cys-101, Cys-104, and Ser-312. Residues 83–301 (WSHGTATFMV…RQEGLRRGFR (219 aa)) form the Radical SAM core domain.

Belongs to the radical SAM superfamily. Lipoyl synthase family. The cofactor is [4Fe-4S] cluster.

Its subcellular location is the cytoplasm. The enzyme catalyses [[Fe-S] cluster scaffold protein carrying a second [4Fe-4S](2+) cluster] + N(6)-octanoyl-L-lysyl-[protein] + 2 oxidized [2Fe-2S]-[ferredoxin] + 2 S-adenosyl-L-methionine + 4 H(+) = [[Fe-S] cluster scaffold protein] + N(6)-[(R)-dihydrolipoyl]-L-lysyl-[protein] + 4 Fe(3+) + 2 hydrogen sulfide + 2 5'-deoxyadenosine + 2 L-methionine + 2 reduced [2Fe-2S]-[ferredoxin]. It participates in protein modification; protein lipoylation via endogenous pathway; protein N(6)-(lipoyl)lysine from octanoyl-[acyl-carrier-protein]: step 2/2. Its function is as follows. Catalyzes the radical-mediated insertion of two sulfur atoms into the C-6 and C-8 positions of the octanoyl moiety bound to the lipoyl domains of lipoate-dependent enzymes, thereby converting the octanoylated domains into lipoylated derivatives. The protein is Lipoyl synthase of Halorhodospira halophila (strain DSM 244 / SL1) (Ectothiorhodospira halophila (strain DSM 244 / SL1)).